The chain runs to 177 residues: Neuroblastoma suppressor of tumorigenicity 1 (177 aa).

The N-terminal stretch at 1-16 (MLWFVVGALFPALLLA) is a signal peptide. 5 disulfides stabilise this stretch: Cys34-Cys84, Cys48-Cys98, Cys58-Cys117, Cys62-Cys119, and Cys81-Cys122. Positions 34–123 (CEAKNITQIV…ILHCSCQACG (90 aa)) constitute a CTCK domain. A disordered region spans residues 143–177 (MPAEGPGPHHYAHHQQEVEEPPASSHHHHEEEGDE).

It belongs to the DAN family.

It localises to the secreted. In terms of biological role, may act as a tumor suppressor. In Gallus gallus (Chicken), this protein is Neuroblastoma suppressor of tumorigenicity 1 (NBL1).